Reading from the N-terminus, the 82-residue chain is Small ribosomal subunit protein uS17 (82 aa).

The protein belongs to the universal ribosomal protein uS17 family. In terms of assembly, part of the 30S ribosomal subunit.

In terms of biological role, one of the primary rRNA binding proteins, it binds specifically to the 5'-end of 16S ribosomal RNA. The chain is Small ribosomal subunit protein uS17 from Rhodopseudomonas palustris (strain BisA53).